The primary structure comprises 1190 residues: JNK-interacting protein (1190 aa).

Positions 1–35 (MACNLSPVNEMADSITSSTPSEIVYGGPGSPDEHR) are disordered. In terms of domain architecture, RH1 spans 24–112 (VYGGPGSPDE…QTQYEREKAL (89 aa)). The stretch at 78 to 165 (LDLAYLERDE…TDHASRLEER (88 aa)) forms a coiled coil. Positions 263-364 (DEFSSDIEPS…DDTSDDGSLG (102 aa)) are disordered. The span at 277–292 (PQSSADALTSPITTKE) shows a compositional bias: polar residues. Residues 383–491 (KNALNIVKND…EESIKWTEMQ (109 aa)) are a coiled coil. Positions 456–542 (RKRFTRSEMQ…RASSSRGKMT (87 aa)) constitute an RH2 domain. The segment at 775–829 (EDGVPTYCSNDMKPSPKRTRDFSISEVAPVDSSAPVKEDPLPPPANRPGGRAALP) is disordered.

Belongs to the JIP scaffold family. Expressed in neurons of the ventral cord, retrovesicular and preanal ganglia and nerve ring, intestinal cells, seam and hypodermal cells, body wall, head muscle and pharynx.

It is found in the cytoplasm. The protein localises to the perinuclear region. Its function is as follows. The JNK-interacting protein (JIP) group of scaffold proteins selectively mediates JNK signaling by aggregating specific components of the MAPK cascade to form a functional JNK signaling module. May function as a regulator of synaptic vesicle transport, through interactions with the JNK-signaling components and motor proteins. Binds specific components of the JNK signaling pathway namely jnk-1, jkk-1 and sek-1. Associates with components of the motor protein, kinesin-1. Pre-assembled unc-16 scaffolding complexes are then transported as a cargo of kinesin, to the required subcellular location. Regulates the retrograde transport of autophagosomes from the neurites to the cell body of AIY interneurons. This is JNK-interacting protein from Caenorhabditis elegans.